The primary structure comprises 107 residues: Heme-degrading monooxygenase (107 aa).

An ABM domain is found at 2–94 (IIVTNTAKIT…YILDNKITYY (93 aa)). A Fe cation-binding site is contributed by Asn6. His76 contributes to the heme binding site.

Belongs to the antibiotic biosynthesis monooxygenase family. Heme-degrading monooxygenase IsdG subfamily. In terms of assembly, homodimer.

The protein resides in the cytoplasm. The catalysed reaction is heme b + 3 reduced [NADPH--hemoprotein reductase] + 3 O2 = biliverdin IXalpha + CO + Fe(2+) + 3 oxidized [NADPH--hemoprotein reductase] + 3 H2O + H(+). Functionally, allows bacterial pathogens to use the host heme as an iron source. Catalyzes the oxidative degradation of the heme macrocyclic porphyrin ring to the biliverdin in the presence of a suitable electron donor such as ascorbate or NADPH--cytochrome P450 reductase, with subsequent release of free iron. The protein is Heme-degrading monooxygenase of Bacillus thuringiensis subsp. konkukian (strain 97-27).